Here is an 89-residue protein sequence, read N- to C-terminus: Small ribosomal subunit protein uS15c (89 aa).

This sequence belongs to the universal ribosomal protein uS15 family. As to quaternary structure, part of the 30S ribosomal subunit.

It localises to the plastid. It is found in the chloroplast. This Chloranthus spicatus (Chulantree) protein is Small ribosomal subunit protein uS15c (rps15).